The primary structure comprises 614 residues: MIKKASLLTACSVTAFSAWAQDTSPDTLVVTANRFEQPRSTVLAPTTVVTRQDIDRWQSTSVNDVLRRLPGVDITQNGGSGQLSSIFIRGTNASHVLVLIDGVRLNLAGVSGSADLSQFPIALVQRVEYIRGPRSAVYGSDAIGGVVNIITTRDEPGTEISAGWGSNSYQNYDVSTQQQLGDKTRVTLLGDYAHTHGYDVVAYGNTGTQAQTDNDGFLSKTLYGALEHNFTDAWSGFVRGYGYDNRTNYDAYYSPGSPLLDTRKLYSQSWDAGLRYNGELIKSQLITSYSHSKDYNYDPHFGRYDSSATLDEMKQYTVQWANNVIVGHGSIGAGVDWQKQTTTPGTGYVENGYDQRNTGIYLTGLQQVGDFTFEGAARSDDNSQFGRHGTWQTSAGWEFIEGYRFIASYGTSYKAPNLGQLYGFYGNPNLDPEKSKQWEGAFEGLTAGVNWRISGYRNDVSDLIDYDDHTLKYYNEGKARIKGVEATANFDTGPLTHTVSYDYVDARNAITDTPLLRRAKQQVKYQLDWQLYDFDWGITYQYLGTRYDKDYSSYPYQTVKMGGVSLWDLAVAYPVTSHLTVRGKIANLFDKDYETVYGYQTAGREYTLSGSYTF.

Residues 1–20 (MIKKASLLTACSVTAFSAWA) form the signal peptide. The short motif at 26 to 33 (DTLVVTAN) is the TonB box element. Residues 38–152 (PRSTVLAPTT…IGGVVNIITT (115 aa)) enclose the TBDR plug domain. Residues leucine 83, serine 85, asparagine 92, and 110-111 (VS) contribute to the cyanocob(III)alamin site. The 460-residue stretch at 155–614 (EPGTEISAGW…EYTLSGSYTF (460 aa)) folds into the TBDR beta-barrel domain. 3 beta stranded membrane passes run 158 to 165 (TEISAGWG), 169 to 178 (YQNYDVSTQQ), and 184 to 195 (TRVTLLGDYAHT). 4 residues coordinate Ca(2+): aspartate 199, glutamine 211, aspartate 213, and aspartate 215. The next 2 beta stranded transmembrane spans lie at 217–227 (FLSKTLYGALE) and 232–248 (DAWS…NRTN). Ca(2+) is bound by residues tyrosine 249 and aspartate 250. Residue alanine 251 coordinates cyanocob(III)alamin. Residue aspartate 261 coordinates Ca(2+). The next 14 membrane-spanning stretches (beta stranded) occupy residues 263-277 (RKLY…LRYN), 279-296 (ELIK…KDYN), 309-325 (TLDE…NNVI), 328-337 (HGSIGAGVDW), 353-369 (YDQR…QQVG), 371-381 (FTFEGAARSDD), 385-400 (FGRH…WEFI), 403-417 (YRFI…KAPN), 434-443 (KSKQWEGAFE), 449-458 (VNWRISGYRN), 473-490 (YYNE…TANF), 494-509 (PLTH…ARNA), 517-529 (RRAK…QLDW), and 535-550 (DWGI…YDKD). Residue threonine 309 participates in cyanocob(III)alamin binding. Arginine 517 contacts cyanocob(III)alamin. A cyanocob(III)alamin-binding site is contributed by tyrosine 551. 3 consecutive transmembrane segments (beta stranded) span residues 558 to 572 (TVKM…LAVA), 585 to 596 (IANLFDKDYETV), and 602 to 614 (AGRE…SYTF). A TonB C-terminal box motif is present at residues 597 to 614 (YGYQTAGREYTLSGSYTF).

It belongs to the TonB-dependent receptor family. BtuB (TC 1.B.14.3.1) subfamily.

Its subcellular location is the cell outer membrane. Functionally, involved in the active translocation of vitamin B12 (cyanocobalamin) across the outer membrane to the periplasmic space. It derives its energy for transport by interacting with the trans-periplasmic membrane protein TonB. The sequence is that of Vitamin B12 transporter BtuB from Escherichia coli O9:H4 (strain HS).